A 422-amino-acid polypeptide reads, in one-letter code: Glutamyl-tRNA reductase (422 aa).

Residues 48–51 (TCNR), Ser-100, 105–107 (EDQ), and Gln-111 contribute to the substrate site. The active-site Nucleophile is Cys-49. Residue 180 to 185 (GTGEMG) coordinates NADP(+).

Belongs to the glutamyl-tRNA reductase family. As to quaternary structure, homodimer.

The enzyme catalyses (S)-4-amino-5-oxopentanoate + tRNA(Glu) + NADP(+) = L-glutamyl-tRNA(Glu) + NADPH + H(+). Its pathway is porphyrin-containing compound metabolism; protoporphyrin-IX biosynthesis; 5-aminolevulinate from L-glutamyl-tRNA(Glu): step 1/2. Catalyzes the NADPH-dependent reduction of glutamyl-tRNA(Glu) to glutamate 1-semialdehyde (GSA). The chain is Glutamyl-tRNA reductase from Methanococcoides burtonii (strain DSM 6242 / NBRC 107633 / OCM 468 / ACE-M).